Here is a 486-residue protein sequence, read N- to C-terminus: Glutamyl-tRNA(Gln) amidotransferase subunit A (486 aa).

Residues Lys79 and Ser154 each act as charge relay system in the active site. The active-site Acyl-ester intermediate is Ser178.

This sequence belongs to the amidase family. GatA subfamily. Heterotrimer of A, B and C subunits.

It carries out the reaction L-glutamyl-tRNA(Gln) + L-glutamine + ATP + H2O = L-glutaminyl-tRNA(Gln) + L-glutamate + ADP + phosphate + H(+). Allows the formation of correctly charged Gln-tRNA(Gln) through the transamidation of misacylated Glu-tRNA(Gln) in organisms which lack glutaminyl-tRNA synthetase. The reaction takes place in the presence of glutamine and ATP through an activated gamma-phospho-Glu-tRNA(Gln). The sequence is that of Glutamyl-tRNA(Gln) amidotransferase subunit A from Dehalococcoides mccartyi (strain ATCC BAA-2100 / JCM 16839 / KCTC 5957 / BAV1).